A 170-amino-acid chain; its full sequence is Crossover junction endodeoxyribonuclease RuvC (170 aa).

Catalysis depends on residues D9, E70, and D145. D9, E70, and D145 together coordinate Mg(2+).

The protein belongs to the RuvC family. Homodimer which binds Holliday junction (HJ) DNA. The HJ becomes 2-fold symmetrical on binding to RuvC with unstacked arms; it has a different conformation from HJ DNA in complex with RuvA. In the full resolvosome a probable DNA-RuvA(4)-RuvB(12)-RuvC(2) complex forms which resolves the HJ. Requires Mg(2+) as cofactor.

The protein localises to the cytoplasm. It catalyses the reaction Endonucleolytic cleavage at a junction such as a reciprocal single-stranded crossover between two homologous DNA duplexes (Holliday junction).. Its function is as follows. The RuvA-RuvB-RuvC complex processes Holliday junction (HJ) DNA during genetic recombination and DNA repair. Endonuclease that resolves HJ intermediates. Cleaves cruciform DNA by making single-stranded nicks across the HJ at symmetrical positions within the homologous arms, yielding a 5'-phosphate and a 3'-hydroxyl group; requires a central core of homology in the junction. The consensus cleavage sequence is 5'-(A/T)TT(C/G)-3'. Cleavage occurs on the 3'-side of the TT dinucleotide at the point of strand exchange. HJ branch migration catalyzed by RuvA-RuvB allows RuvC to scan DNA until it finds its consensus sequence, where it cleaves and resolves the cruciform DNA. In Chlamydia muridarum (strain MoPn / Nigg), this protein is Crossover junction endodeoxyribonuclease RuvC.